The sequence spans 486 residues: MVENQRAMPQPEMRRIRRIHFVGIGGVGMCGIAEVLLNLGYEVSGSDLKGSAVTERLESFGAQIFIGHRAENTIGADVLVVSSAVNTSNPEVATALERRIPVVPRAEMLAELMRYRHGIAVAGTHGKTTTTSLIASVFAAGGLDPTFVIGGRLNAAGTNAQLGTSRYLIAEADESDASFLHLQPLVAVVTNIDADHMATYEGDFNKLKKTFVEFLHNLPFYGLAVMCIDDPVVREILPLVKRPTLTYGFSESADIRAINVRQDGMLTFFTVLRRDREPLDVSVNMPGNHNVLNSLATIAIATDEGVSDEAIVQGLSGFQGVGRRFQVYGELPVDGGHVMLVDDYGHHPREVAAVINAVRGGWPDRRLVMVYQPHRFSRTRDLYDDFVQVLADANVLLLMEVYPAGEEPIPGADSRNLCHSIRQSGQLDPIYIERGVELAPLVKPLLRAGDILLCQGAGDIGGLAPQLLKSPLFAGAKVASTEGKLK.

An ATP-binding site is contributed by 123–129 (GTHGKTT).

The protein belongs to the MurCDEF family.

It is found in the cytoplasm. It catalyses the reaction UDP-N-acetyl-alpha-D-muramate + L-alanine + ATP = UDP-N-acetyl-alpha-D-muramoyl-L-alanine + ADP + phosphate + H(+). It participates in cell wall biogenesis; peptidoglycan biosynthesis. In terms of biological role, cell wall formation. The sequence is that of UDP-N-acetylmuramate--L-alanine ligase from Pseudomonas syringae pv. syringae (strain B728a).